A 346-amino-acid polypeptide reads, in one-letter code: Beta-hexosaminidase (346 aa).

Substrate contacts are provided by residues Asp62, Arg70, Arg134, and Lys164–His165. The active-site Proton donor/acceptor is the His177. The active-site Nucleophile is the Asp249.

The protein belongs to the glycosyl hydrolase 3 family. NagZ subfamily.

It localises to the cytoplasm. The enzyme catalyses Hydrolysis of terminal non-reducing N-acetyl-D-hexosamine residues in N-acetyl-beta-D-hexosaminides.. The protein operates within cell wall biogenesis; peptidoglycan recycling. Functionally, plays a role in peptidoglycan recycling by cleaving the terminal beta-1,4-linked N-acetylglucosamine (GlcNAc) from peptide-linked peptidoglycan fragments, giving rise to free GlcNAc, anhydro-N-acetylmuramic acid and anhydro-N-acetylmuramic acid-linked peptides. The polypeptide is Beta-hexosaminidase (Actinobacillus succinogenes (strain ATCC 55618 / DSM 22257 / CCUG 43843 / 130Z)).